Here is a 447-residue protein sequence, read N- to C-terminus: Probable protein phosphatase 2C 71 (447 aa).

One can recognise a PPM-type phosphatase domain in the interval 33–279; it reads SYGYASSAGK…DNITCVVVRF (247 aa). Residues aspartate 69, glycine 70, aspartate 231, and aspartate 270 each coordinate Mn(2+). The segment covering 284-297 has biased composition (low complexity); sequence SANNNGSSSSEEAN. Residues 284–447 form a disordered region; the sequence is SANNNGSSSS…ARKTTPSIFN (164 aa). The span at 305 to 331 shows a compositional bias: basic and acidic residues; that stretch reads NDSDHKISAKETNQDHTTVNKDLDRNT. Polar residues-rich tracts occupy residues 346–374 and 392–423; these read ADNS…TGEK and KVPN…GSTG. Over residues 424 to 438 the composition is skewed to basic and acidic residues; sequence ERNRKPIKVHSDSAA.

Belongs to the PP2C family. Mg(2+) serves as cofactor. It depends on Mn(2+) as a cofactor.

The enzyme catalyses O-phospho-L-seryl-[protein] + H2O = L-seryl-[protein] + phosphate. The catalysed reaction is O-phospho-L-threonyl-[protein] + H2O = L-threonyl-[protein] + phosphate. In Arabidopsis thaliana (Mouse-ear cress), this protein is Probable protein phosphatase 2C 71.